A 286-amino-acid chain; its full sequence is Nucleotide-binding protein VC_2532 (286 aa).

An ATP-binding site is contributed by 8-15 (GQSGAGKS). Residue 56–59 (DIRN) coordinates GTP.

The protein belongs to the RapZ-like family.

Displays ATPase and GTPase activities. This chain is Nucleotide-binding protein VC_2532, found in Vibrio cholerae serotype O1 (strain ATCC 39315 / El Tor Inaba N16961).